Consider the following 213-residue polypeptide: 3,4-dihydroxy-2-butanone 4-phosphate synthase (213 aa).

D-ribulose 5-phosphate contacts are provided by residues 37–38 (RE), aspartate 42, 150–154 (RAGHT), and glutamate 174. A Mg(2+)-binding site is contributed by glutamate 38. Histidine 153 serves as a coordination point for Mg(2+).

Belongs to the DHBP synthase family. Homodimer. Mg(2+) is required as a cofactor. The cofactor is Mn(2+).

It catalyses the reaction D-ribulose 5-phosphate = (2S)-2-hydroxy-3-oxobutyl phosphate + formate + H(+). It functions in the pathway cofactor biosynthesis; riboflavin biosynthesis; 2-hydroxy-3-oxobutyl phosphate from D-ribulose 5-phosphate: step 1/1. Catalyzes the conversion of D-ribulose 5-phosphate to formate and 3,4-dihydroxy-2-butanone 4-phosphate. The chain is 3,4-dihydroxy-2-butanone 4-phosphate synthase from Wigglesworthia glossinidia brevipalpis.